The chain runs to 132 residues: MARDSLSEAGLHFDELNKLRILDPDVSQQTTELKEECRDFVDKIGHFQKVVGGLIELVDELAKETENEKMKAIGARNLLKSIAKQREAQQQQLYALIAEKKMQLERYRIEYDALCKVEAEQHEFIDQFNLQK.

A coiled-coil region spans residues Glu-87 to Asp-112.

It is found in the golgi apparatus. The protein resides in the cis-Golgi network. Its subcellular location is the cytoplasm. It localises to the cytoskeleton. The protein localises to the microtubule organizing center. It is found in the centrosome. The protein resides in the centriole. Its subcellular location is the cell projection. It localises to the cilium. Involved in ciliary process assembly. May play a role in the trafficking of ciliary membrane proteins from the Golgi complex to the cilium. Regulates the platelet-derived growth factor receptor-alpha (PDGFRA) signaling pathway. Plays an important role in spermatogenesis, particularly spermiogenesis, when germ cells form flagella. The chain is Intraflagellar transport protein 20 homolog B (ift20-b) from Xenopus laevis (African clawed frog).